Here is a 222-residue protein sequence, read N- to C-terminus: Ribonuclease T (222 aa).

An Exonuclease domain is found at 20–194 (VVIDVETAGF…YDTERTAELF (175 aa)). Residues aspartate 23, glutamate 25, histidine 181, and aspartate 186 each coordinate Mg(2+). Histidine 181 functions as the Proton donor/acceptor in the catalytic mechanism.

It belongs to the RNase T family. Homodimer. Mg(2+) serves as cofactor.

In terms of biological role, trims short 3' overhangs of a variety of RNA species, leaving a one or two nucleotide 3' overhang. Responsible for the end-turnover of tRNA: specifically removes the terminal AMP residue from uncharged tRNA (tRNA-C-C-A). Also appears to be involved in tRNA biosynthesis. This Shewanella sp. (strain ANA-3) protein is Ribonuclease T.